Reading from the N-terminus, the 354-residue chain is Nicotinate-nucleotide--dimethylbenzimidazole phosphoribosyltransferase (354 aa).

E319 acts as the Proton acceptor in catalysis.

Belongs to the CobT family.

It catalyses the reaction 5,6-dimethylbenzimidazole + nicotinate beta-D-ribonucleotide = alpha-ribazole 5'-phosphate + nicotinate + H(+). It participates in nucleoside biosynthesis; alpha-ribazole biosynthesis; alpha-ribazole from 5,6-dimethylbenzimidazole: step 1/2. Functionally, catalyzes the synthesis of alpha-ribazole-5'-phosphate from nicotinate mononucleotide (NAMN) and 5,6-dimethylbenzimidazole (DMB). This Pelodictyon phaeoclathratiforme (strain DSM 5477 / BU-1) protein is Nicotinate-nucleotide--dimethylbenzimidazole phosphoribosyltransferase.